Here is a 933-residue protein sequence, read N- to C-terminus: Dual 3',5'-cyclic-AMP and -GMP phosphodiesterase 11A (933 aa).

The interval 42–121 (HTSGQGASSL…LQRRASQKEL (80 aa)) is disordered. Phosphoserine is present on residues S162, S163, and S239. GAF domains follow at residues 217–370 (DLTS…GIAI) and 402–558 (DLEK…GLGI). S424 contributes to the 3',5'-cyclic GMP binding site. A PDEase domain is found at 588 to 912 (SKAEVDKFKA…RKWEELHQKR (325 aa)). The Proton donor role is filled by H664. Residues H668, H704, D705, and D816 each coordinate a divalent metal cation. The tract at residues 913 to 933 (LQVSAASPDPASPMVAGEDRL) is disordered.

The protein belongs to the cyclic nucleotide phosphodiesterase family. A divalent metal cation is required as a cofactor. Expressed in testis and developing spermatoza.

It localises to the cytoplasm. Its subcellular location is the cytosol. The catalysed reaction is 3',5'-cyclic GMP + H2O = GMP + H(+). It carries out the reaction 3',5'-cyclic AMP + H2O = AMP + H(+). Inhibited by 3-isobutyl-1-methylxanthine (IBMX), zaprinast and dipyridamole. cGMP acts as an allosteric activator. Functionally, plays a role in signal transduction by regulating the intracellular concentration of cyclic nucleotides cAMP and cGMP. Catalyzes the hydrolysis of both cAMP and cGMP to 5'-AMP and 5'-GMP, respectively. This is Dual 3',5'-cyclic-AMP and -GMP phosphodiesterase 11A (Pde11a) from Mus musculus (Mouse).